We begin with the raw amino-acid sequence, 266 residues long: Hydroxyethylthiazole kinase (266 aa).

M43 serves as a coordination point for substrate. 2 residues coordinate ATP: R119 and T166. Residue G193 coordinates substrate.

It belongs to the Thz kinase family. Mg(2+) serves as cofactor.

The catalysed reaction is 5-(2-hydroxyethyl)-4-methylthiazole + ATP = 4-methyl-5-(2-phosphooxyethyl)-thiazole + ADP + H(+). Its pathway is cofactor biosynthesis; thiamine diphosphate biosynthesis; 4-methyl-5-(2-phosphoethyl)-thiazole from 5-(2-hydroxyethyl)-4-methylthiazole: step 1/1. Its function is as follows. Catalyzes the phosphorylation of the hydroxyl group of 4-methyl-5-beta-hydroxyethylthiazole (THZ). This Methanococcus maripaludis (strain C6 / ATCC BAA-1332) protein is Hydroxyethylthiazole kinase.